A 340-amino-acid chain; its full sequence is Ketol-acid reductoisomerase (NADP(+)) (340 aa).

In terms of domain architecture, KARI N-terminal Rossmann spans 3-182 (VQMEYEKDVK…GAARVGLLET (180 aa)). Residues 26–29 (YGSQ), arginine 49, serine 53, and 83–86 (DEIQ) each bind NADP(+). The active site involves histidine 108. NADP(+) is bound at residue glycine 134. Residues 183–328 (TYKEETEEDL…AELRKAMPFV (146 aa)) form the KARI C-terminal knotted domain. Aspartate 191, glutamate 195, glutamate 227, and glutamate 231 together coordinate Mg(2+). Serine 252 is a substrate binding site.

The protein belongs to the ketol-acid reductoisomerase family. Mg(2+) is required as a cofactor.

The enzyme catalyses (2R)-2,3-dihydroxy-3-methylbutanoate + NADP(+) = (2S)-2-acetolactate + NADPH + H(+). The catalysed reaction is (2R,3R)-2,3-dihydroxy-3-methylpentanoate + NADP(+) = (S)-2-ethyl-2-hydroxy-3-oxobutanoate + NADPH + H(+). The protein operates within amino-acid biosynthesis; L-isoleucine biosynthesis; L-isoleucine from 2-oxobutanoate: step 2/4. It participates in amino-acid biosynthesis; L-valine biosynthesis; L-valine from pyruvate: step 2/4. Its function is as follows. Involved in the biosynthesis of branched-chain amino acids (BCAA). Catalyzes an alkyl-migration followed by a ketol-acid reduction of (S)-2-acetolactate (S2AL) to yield (R)-2,3-dihydroxy-isovalerate. In the isomerase reaction, S2AL is rearranged via a Mg-dependent methyl migration to produce 3-hydroxy-3-methyl-2-ketobutyrate (HMKB). In the reductase reaction, this 2-ketoacid undergoes a metal-dependent reduction by NADPH to yield (R)-2,3-dihydroxy-isovalerate. This Streptococcus pneumoniae (strain JJA) protein is Ketol-acid reductoisomerase (NADP(+)).